The chain runs to 239 residues: Ribose-5-phosphate isomerase A (239 aa).

Residues 30-33 (SGST), 87-90 (DGAD), and 100-103 (KGGG) contribute to the substrate site. The active-site Proton acceptor is glutamate 109. Lysine 127 lines the substrate pocket.

It belongs to the ribose 5-phosphate isomerase family. In terms of assembly, homodimer.

The catalysed reaction is aldehydo-D-ribose 5-phosphate = D-ribulose 5-phosphate. It participates in carbohydrate degradation; pentose phosphate pathway; D-ribose 5-phosphate from D-ribulose 5-phosphate (non-oxidative stage): step 1/1. In terms of biological role, catalyzes the reversible conversion of ribose-5-phosphate to ribulose 5-phosphate. This is Ribose-5-phosphate isomerase A from Synechococcus sp. (strain CC9605).